The sequence spans 325 residues: Plasminogen (325 aa).

2 Kringle domains span residues 80–146 and 159–217; these read ACVK…VPSC and LTPA…VLSV. 4 cysteine pairs are disulfide-bonded: Cys81–Cys146, Cys102–Cys135, Cys124–Cys141, and Cys188–Cys212.

The protein belongs to the peptidase S1 family. Plasminogen subfamily.

Its subcellular location is the secreted. The enzyme catalyses Preferential cleavage: Lys-|-Xaa &gt; Arg-|-Xaa, higher selectivity than trypsin. Converts fibrin into soluble products.. Its function is as follows. Plasmin dissolves the fibrin of blood clots and acts as a proteolytic factor in a variety of other processes including embryonic development, tissue remodeling, tumor invasion, and inflammation. The chain is Plasminogen from Petromyzon marinus (Sea lamprey).